Reading from the N-terminus, the 539-residue chain is MATIALPWSLSLYVFLLLLATPWASAAVKNCSHLECFYNSRANVSCMWSHEEALNVTTCHVHAKSNLRHWNKTCELTLVRQASWACNLILGSFPESQSLTSVDLLDINVVCWEEKGWRRVKTCDFHPFDNLRLVAPHSLQVLHIDTQRCNISWKVSQVSHYIEPYLEFEARRRLLGHSWEDASVLSLKQRQQWLFLEMLIPSTSYEVQVRVKAQRNNTGTWSPWSQPLTFRTRPADPMKEILPMSWLRYLLLVLGCFSGFFSCVYILVKCRYLGPWLKTVLKCHIPDPSEFFSQLSSQHGGDLQKWLSSPVPLSFFSPSGPAPEISPLEVLDGDSKAVQLLLLQKDSAPLPSPSGHSQASCFTNQGYFFFHLPNALEIESCQVYFTYDPCVEEEVEEDGSRLPEGSPHPPLLPLAGEQDDYCAFPPRDDLLLFSPSLSTPNTAYGGSRAPEERSPLSLHEGLPSLASRDLMGLQRPLERMPEGDGEGLSANSSGEQASVPEGNLHGQDQDRGQGPILTLNTDAYLSLQELQAQDSVHLI.

A signal peptide spans 1-26; it reads MATIALPWSLSLYVFLLLLATPWASA. Over 27–240 the chain is Extracellular; sequence AVKNCSHLEC…RTRPADPMKE (214 aa). Residues Asn30, Asn43, Asn55, and Asn71 are each glycosylated (N-linked (GlcNAc...) asparagine). Cys36 and Cys46 form a disulfide bridge. A disulfide bridge connects residues Cys74 and Cys86. In terms of domain architecture, Fibronectin type-III spans 135 to 235; the sequence is APHSLQVLHI…QPLTFRTRPA (101 aa). Residues Asn150 and Asn216 are each glycosylated (N-linked (GlcNAc...) asparagine). A WSXWS motif motif is present at residues 221–225; it reads WSPWS. Residues 241–268 form a helical membrane-spanning segment; that stretch reads ILPMSWLRYLLLVLGCFSGFFSCVYILV. At 269–539 the chain is on the cytoplasmic side; the sequence is KCRYLGPWLK…LQAQDSVHLI (271 aa). The Box 1 motif motif lies at 281-289; that stretch reads LKCHIPDPS. Disordered stretches follow at residues 395–419, 440–465, and 477–516; these read VEED…GEQD, PNTA…LPSL, and LERM…QGPI.

Belongs to the type I cytokine receptor family. Type 4 subfamily. Non-covalent dimer of an alpha and a beta subunit. IL2R exists in 3 different forms: a high affinity dimer, an intermediate affinity monomer (beta subunit), and a low affinity monomer (alpha subunit). The high and intermediate affinity forms also associate with a gamma subunit. Interacts with SHB upon interleukin stimulation.

It is found in the cell membrane. The protein localises to the cell surface. Functionally, receptor for interleukin-2. This beta subunit is involved in receptor mediated endocytosis and transduces the mitogenic signals of IL2. Probably in association with IL15RA, involved in the stimulation of neutrophil phagocytosis by IL15. This chain is Interleukin-2 receptor subunit beta (Il2rb), found in Mus musculus (Mouse).